A 158-amino-acid chain; its full sequence is NAD(P)H-quinone oxidoreductase subunit J, chloroplastic (158 aa).

The protein belongs to the complex I 30 kDa subunit family. In terms of assembly, NDH is composed of at least 16 different subunits, 5 of which are encoded in the nucleus.

The protein resides in the plastid. It localises to the chloroplast thylakoid membrane. The enzyme catalyses a plastoquinone + NADH + (n+1) H(+)(in) = a plastoquinol + NAD(+) + n H(+)(out). The catalysed reaction is a plastoquinone + NADPH + (n+1) H(+)(in) = a plastoquinol + NADP(+) + n H(+)(out). Its function is as follows. NDH shuttles electrons from NAD(P)H:plastoquinone, via FMN and iron-sulfur (Fe-S) centers, to quinones in the photosynthetic chain and possibly in a chloroplast respiratory chain. The immediate electron acceptor for the enzyme in this species is believed to be plastoquinone. Couples the redox reaction to proton translocation, and thus conserves the redox energy in a proton gradient. In Nymphaea alba (White water-lily), this protein is NAD(P)H-quinone oxidoreductase subunit J, chloroplastic.